The primary structure comprises 444 residues: Ribosomal protein uS12 methylthiotransferase RimO (444 aa).

The region spanning 4 to 118 is the MTTase N-terminal domain; it reads IKYGVVSLGC…LSDAIKKSIE (115 aa). [4Fe-4S] cluster-binding residues include cysteine 13, cysteine 48, cysteine 81, cysteine 155, cysteine 159, and cysteine 162. Residues 141 to 373 enclose the Radical SAM core domain; that stretch reads TTQKHYAYLR…MQRDIVKSIN (233 aa). Residues 374–440 enclose the TRAM domain; that stretch reads ADKVNKVYKV…EYDLIGVVCD (67 aa).

Belongs to the methylthiotransferase family. RimO subfamily. Requires [4Fe-4S] cluster as cofactor.

It is found in the cytoplasm. The enzyme catalyses L-aspartate(89)-[ribosomal protein uS12]-hydrogen + (sulfur carrier)-SH + AH2 + 2 S-adenosyl-L-methionine = 3-methylsulfanyl-L-aspartate(89)-[ribosomal protein uS12]-hydrogen + (sulfur carrier)-H + 5'-deoxyadenosine + L-methionine + A + S-adenosyl-L-homocysteine + 2 H(+). In terms of biological role, catalyzes the methylthiolation of an aspartic acid residue of ribosomal protein uS12. The polypeptide is Ribosomal protein uS12 methylthiotransferase RimO (Clostridium tetani (strain Massachusetts / E88)).